We begin with the raw amino-acid sequence, 319 residues long: Acetyl-coenzyme A carboxylase carboxyl transferase subunit alpha (319 aa).

Residues 39-293 (RLQKKSNDLT…KAVLEKQLHE (255 aa)) form the CoA carboxyltransferase C-terminal domain.

It belongs to the AccA family. As to quaternary structure, acetyl-CoA carboxylase is a heterohexamer composed of biotin carboxyl carrier protein (AccB), biotin carboxylase (AccC) and two subunits each of ACCase subunit alpha (AccA) and ACCase subunit beta (AccD).

The protein localises to the cytoplasm. It catalyses the reaction N(6)-carboxybiotinyl-L-lysyl-[protein] + acetyl-CoA = N(6)-biotinyl-L-lysyl-[protein] + malonyl-CoA. Its pathway is lipid metabolism; malonyl-CoA biosynthesis; malonyl-CoA from acetyl-CoA: step 1/1. Functionally, component of the acetyl coenzyme A carboxylase (ACC) complex. First, biotin carboxylase catalyzes the carboxylation of biotin on its carrier protein (BCCP) and then the CO(2) group is transferred by the carboxyltransferase to acetyl-CoA to form malonyl-CoA. The sequence is that of Acetyl-coenzyme A carboxylase carboxyl transferase subunit alpha from Neisseria meningitidis serogroup B (strain ATCC BAA-335 / MC58).